We begin with the raw amino-acid sequence, 175 residues long: NADH-ubiquinone oxidoreductase chain 6 (175 aa).

Transmembrane regions (helical) follow at residues 1–21, 25–45, 47–67, 88–108, and 149–169; these read MMTY…VSFS, SPIY…GIVL, FGGS…MLVV, AVLA…CYIL, and YGTW…LVIM.

The protein belongs to the complex I subunit 6 family. In terms of assembly, core subunit of respiratory chain NADH dehydrogenase (Complex I) which is composed of 45 different subunits.

The protein resides in the mitochondrion inner membrane. The catalysed reaction is a ubiquinone + NADH + 5 H(+)(in) = a ubiquinol + NAD(+) + 4 H(+)(out). Functionally, core subunit of the mitochondrial membrane respiratory chain NADH dehydrogenase (Complex I) which catalyzes electron transfer from NADH through the respiratory chain, using ubiquinone as an electron acceptor. Essential for the catalytic activity and assembly of complex I. The protein is NADH-ubiquinone oxidoreductase chain 6 (MT-ND6) of Felis catus (Cat).